The primary structure comprises 445 residues: Probable glycine dehydrogenase (decarboxylating) subunit 1 (445 aa).

The protein belongs to the GcvP family. N-terminal subunit subfamily. The glycine cleavage system is composed of four proteins: P, T, L and H. In this organism, the P 'protein' is a heterodimer of two subunits.

The catalysed reaction is N(6)-[(R)-lipoyl]-L-lysyl-[glycine-cleavage complex H protein] + glycine + H(+) = N(6)-[(R)-S(8)-aminomethyldihydrolipoyl]-L-lysyl-[glycine-cleavage complex H protein] + CO2. Its function is as follows. The glycine cleavage system catalyzes the degradation of glycine. The P protein binds the alpha-amino group of glycine through its pyridoxal phosphate cofactor; CO(2) is released and the remaining methylamine moiety is then transferred to the lipoamide cofactor of the H protein. This is Probable glycine dehydrogenase (decarboxylating) subunit 1 from Citrifermentans bemidjiense (strain ATCC BAA-1014 / DSM 16622 / JCM 12645 / Bem) (Geobacter bemidjiensis).